Reading from the N-terminus, the 709-residue chain is Translation initiation factor IF-2 (709 aa).

Composition is skewed to basic and acidic residues over residues 47-70 (DHQYRPNTGKKEEKKAEKKTEKPK) and 105-121 (KGKETKKTEAQQQEKKL). The interval 47–157 (DHQYRPNTGK…QPAKKEKELP (111 aa)) is disordered. Positions 125 to 137 (AKKKGKGPAKGKK) are enriched in basic residues. Over residues 138–149 (QAAPAAKQAPQP) the composition is skewed to low complexity. The 170-residue stretch at 240–409 (ERPPVVTIMG…LLVSEMEELK (170 aa)) folds into the tr-type G domain. The G1 stretch occupies residues 249-256 (GHVDHGKT). 249 to 256 (GHVDHGKT) lines the GTP pocket. The G2 stretch occupies residues 274 to 278 (GITQH). The interval 295–298 (DTPG) is G3. Residues 295-299 (DTPGH) and 349-352 (NKID) each bind GTP. Positions 349–352 (NKID) are G4. A G5 region spans residues 385–387 (SAK).

It belongs to the TRAFAC class translation factor GTPase superfamily. Classic translation factor GTPase family. IF-2 subfamily.

The protein resides in the cytoplasm. In terms of biological role, one of the essential components for the initiation of protein synthesis. Protects formylmethionyl-tRNA from spontaneous hydrolysis and promotes its binding to the 30S ribosomal subunits. Also involved in the hydrolysis of GTP during the formation of the 70S ribosomal complex. The chain is Translation initiation factor IF-2 from Geobacillus kaustophilus (strain HTA426).